Here is a 337-residue protein sequence, read N- to C-terminus: Neurogenic differentiation factor 6 (337 aa).

The segment at 28–80 (QKQIKKPESFPKQVVLRGKSIKRAPGEETEKEEEEEDREEEDENGLSRRRGLR) is disordered. The segment covering 54–71 (EETEKEEEEEDREEEDEN) has biased composition (acidic residues). The Nuclear localization signal signature appears at 80-86 (RKKKTTK). A bHLH domain is found at 94 to 146 (FRRQEANARERNRMHGLNDALDNLRKVVPCYSKTQKLSKIETLRLAKNYIWAL).

As to quaternary structure, efficient DNA binding requires dimerization with another bHLH protein. As to expression, specific to the nervous system of both embryos and adults. Highest levels in the cortical plate of the cerebrum.

It is found in the nucleus. In terms of biological role, activates E box-dependent transcription in collaboration with TCF3/E47. May be a trans-acting factor involved in the development and maintenance of the mammalian nervous system. Transactivates the promoter of its own gene. The chain is Neurogenic differentiation factor 6 (Neurod6) from Mus musculus (Mouse).